Consider the following 351-residue polypeptide: Transcriptional activator POG1 (351 aa).

Basic and acidic residues predominate over residues 1-26 (MKQEPHRQSEEKEKPKGPMAVEREQH). Residues 1–56 (MKQEPHRQSEEKEKPKGPMAVEREQHTSLSSGTTVTASTGDESTNSRPVESSQTEK) form a disordered region. Positions 27–56 (TSLSSGTTVTASTGDESTNSRPVESSQTEK) are enriched in polar residues. Phosphoserine is present on residues serine 152 and serine 168. Disordered stretches follow at residues 234–256 (PGMG…TPVM) and 291–351 (QHQL…PPPT). A compositionally biased stretch (polar residues) spans 241-256 (QLPTMSSNSESQTPVM). Position 314 is a phosphoserine (serine 314).

This sequence belongs to the POG1 family. Post-translationally, phosphorylated by CDC28.

It is found in the nucleus. Transcriptional activator which promotes cell cycle recovery with CLN2, after pheromone induced G1 arrest, probably inhibiting the ability of STE20 to activate the pheromone response pathway. Binds the promoters of genes that function in cell cycle regulation, cytoskeletal organization, and spindle assembly. May also be involved in stress-resistance. In Saccharomyces cerevisiae (strain ATCC 204508 / S288c) (Baker's yeast), this protein is Transcriptional activator POG1 (POG1).